Reading from the N-terminus, the 138-residue chain is Outer membrane protein assembly factor BamE (138 aa).

The first 42 residues, 1 to 42, serve as a signal peptide directing secretion; the sequence is MSHLTMIKTLNLRPFHSASALRKIVITSILGVAVTMSGCSLL.

Belongs to the BamE family. Part of the Bam complex.

The protein localises to the cell outer membrane. Part of the outer membrane protein assembly complex, which is involved in assembly and insertion of beta-barrel proteins into the outer membrane. The protein is Outer membrane protein assembly factor BamE of Psychrobacter arcticus (strain DSM 17307 / VKM B-2377 / 273-4).